The primary structure comprises 229 residues: tRNA pseudouridine synthase B (229 aa).

Asp52 (nucleophile) is an active-site residue.

This sequence belongs to the pseudouridine synthase TruB family. Type 1 subfamily.

The enzyme catalyses uridine(55) in tRNA = pseudouridine(55) in tRNA. In terms of biological role, responsible for synthesis of pseudouridine from uracil-55 in the psi GC loop of transfer RNAs. The protein is tRNA pseudouridine synthase B of Flavobacterium johnsoniae (strain ATCC 17061 / DSM 2064 / JCM 8514 / BCRC 14874 / CCUG 350202 / NBRC 14942 / NCIMB 11054 / UW101) (Cytophaga johnsonae).